The sequence spans 550 residues: Proteasome-associated ATPase (550 aa).

Residues 9–48 (EELARRVASLSAQNERLAQILVEARSKIVGLQQQIDDLAQ) are a coiled coil. Residue 233–238 (GCGKTL) coordinates ATP. Positions 528–550 (KGEGKNPTPAKAIETPHNTGPYL) are disordered. Residues 549–550 (YL) are docks into pockets in the proteasome alpha-ring.

This sequence belongs to the AAA ATPase family. Homohexamer. Assembles into a hexameric ring structure that caps the 20S proteasome core. Strongly interacts with the prokaryotic ubiquitin-like protein Pup through a hydrophobic interface; the interacting region of ARC lies in its N-terminal coiled-coil domain. There is one Pup binding site per ARC hexamer ring. Upon ATP-binding, the C-terminus of ARC interacts with the alpha-rings of the proteasome core, possibly by binding to the intersubunit pockets.

Its pathway is protein degradation; proteasomal Pup-dependent pathway. Functionally, ATPase which is responsible for recognizing, binding, unfolding and translocation of pupylated proteins into the bacterial 20S proteasome core particle. May be essential for opening the gate of the 20S proteasome via an interaction with its C-terminus, thereby allowing substrate entry and access to the site of proteolysis. Thus, the C-termini of the proteasomal ATPase may function like a 'key in a lock' to induce gate opening and therefore regulate proteolysis. This is Proteasome-associated ATPase from Jonesia denitrificans (strain ATCC 14870 / DSM 20603 / BCRC 15368 / CIP 55.134 / JCM 11481 / NBRC 15587 / NCTC 10816 / Prevot 55134) (Listeria denitrificans).